Consider the following 114-residue polypeptide: Seed trypsin/chymotrypsin inhibitor TI5-72 (114 aa).

The first 28 residues, 1-28 (MELMNKKVMMKLALMVFLLSFAANVVNA), serve as a signal peptide directing secretion. A propeptide spanning residues 29 to 42 (RFDSTSFITQVLSN) is cleaved from the precursor. 7 cysteine pairs are disulfide-bonded: cysteine 50-cysteine 103, cysteine 51-cysteine 66, cysteine 54-cysteine 99, cysteine 56-cysteine 64, cysteine 73-cysteine 80, cysteine 77-cysteine 92, and cysteine 82-cysteine 90.

The protein belongs to the Bowman-Birk serine protease inhibitor family. In terms of tissue distribution, seed.

Functionally, inhibitor of trypsin and of chymotrypsin. May function as a natural phytochemical defense against predators. The polypeptide is Seed trypsin/chymotrypsin inhibitor TI5-72 (TI572) (Pisum sativum (Garden pea)).